Consider the following 186-residue polypeptide: ATP synthase subunit delta (186 aa).

The protein belongs to the ATPase delta chain family. As to quaternary structure, F-type ATPases have 2 components, F(1) - the catalytic core - and F(0) - the membrane proton channel. F(1) has five subunits: alpha(3), beta(3), gamma(1), delta(1), epsilon(1). F(0) has three main subunits: a(1), b(2) and c(10-14). The alpha and beta chains form an alternating ring which encloses part of the gamma chain. F(1) is attached to F(0) by a central stalk formed by the gamma and epsilon chains, while a peripheral stalk is formed by the delta and b chains.

It is found in the cell inner membrane. In terms of biological role, f(1)F(0) ATP synthase produces ATP from ADP in the presence of a proton or sodium gradient. F-type ATPases consist of two structural domains, F(1) containing the extramembraneous catalytic core and F(0) containing the membrane proton channel, linked together by a central stalk and a peripheral stalk. During catalysis, ATP synthesis in the catalytic domain of F(1) is coupled via a rotary mechanism of the central stalk subunits to proton translocation. This protein is part of the stalk that links CF(0) to CF(1). It either transmits conformational changes from CF(0) to CF(1) or is implicated in proton conduction. The sequence is that of ATP synthase subunit delta from Brucella melitensis biotype 2 (strain ATCC 23457).